Consider the following 154-residue polypeptide: Endoribonuclease YbeY (154 aa).

The Zn(2+) site is built by histidine 113, histidine 117, and histidine 123.

This sequence belongs to the endoribonuclease YbeY family. It depends on Zn(2+) as a cofactor.

Its subcellular location is the cytoplasm. In terms of biological role, single strand-specific metallo-endoribonuclease involved in late-stage 70S ribosome quality control and in maturation of the 3' terminus of the 16S rRNA. This is Endoribonuclease YbeY from Aeromonas hydrophila subsp. hydrophila (strain ATCC 7966 / DSM 30187 / BCRC 13018 / CCUG 14551 / JCM 1027 / KCTC 2358 / NCIMB 9240 / NCTC 8049).